The chain runs to 872 residues: MKELSSAQIRQMWLDFWKSKGHCVEPSANLVPVNDPTLLWINSGVATLKKYFDGSVIPENPRITNAQKSIRTNDIENVGKTARHHTMFEMLGNFSIGDYFRDEAIEWGFELLTSPDWFDFPKDKLYMTYYPDDKDSYNRWIACGVEPSHLVPIEDNFWEIGAGPSGPDTEIFFDRGEDFDPENIGLRLLAEDIENDRYIEIWNIVLSQFNADPAVPRSEYKELPNKNIDTGAGLERLAAVMQGAKTNFETDLFMPIIREVEKLSGKTYNPDGDNMSFKVIADHIRALSFAIGDGALPGNEGRGYVLRRLLRRAVMHGRRLGINETFLYKLVPTVGQIMESYYPEVLEKRDFIEKIVKREEETFARTIDAGSGHLDSLLAQLKAEGKDTLEGKDIFKLYDTYGFPVELTEELAEDAGYKIDHEGFKSAMKEQQDRARAAVVKGGSMGMQNETLAGIVEESRFEYDTYSLESSLSVIIADNERTEAVSEGQALLVFAQTPFYAEMGGQVADTGRIKNDKGDTVAEVVDVQKAPNGQPLHTVNVLASLSVGTNYTLEINKERRLAVEKNHTATHLLHAALHNVIGEHATQAGSLNEEEFLRFDFTHFEAVSNEELRHIEQEVNEQIWNALTITTTETDVETAKEMGAMALFGEKYGKVVRVVQIGNYSVELCGGTHLNNSSEIGLFKIVKEEGIGSGTRRIIAVTGRQAFEAYRNQEDALKEIAATVKAPQLKDAAAKVQALSDSLRDLQKENAELKEKAAAAAAGDVFKDVQEAKGVRFIASQVDVADAGALRTFADNWKQKDYSDVLVLVAAIGEKVNVLVASKTKDVHAGNMIKELAPIVAGRGGGKPDMAMAGGSDASKIAELLAAVAETV.

Zn(2+)-binding residues include H567, H571, C669, and H673.

This sequence belongs to the class-II aminoacyl-tRNA synthetase family. Zn(2+) is required as a cofactor.

The protein resides in the cytoplasm. It catalyses the reaction tRNA(Ala) + L-alanine + ATP = L-alanyl-tRNA(Ala) + AMP + diphosphate. In terms of biological role, catalyzes the attachment of alanine to tRNA(Ala) in a two-step reaction: alanine is first activated by ATP to form Ala-AMP and then transferred to the acceptor end of tRNA(Ala). Also edits incorrectly charged Ser-tRNA(Ala) and Gly-tRNA(Ala) via its editing domain. This Streptococcus pyogenes serotype M28 (strain MGAS6180) protein is Alanine--tRNA ligase.